Reading from the N-terminus, the 337-residue chain is Probable arabinose 5-phosphate isomerase (337 aa).

Residues 58–201 (VIDLILACEG…AVSLITARNF (144 aa)) enclose the SIS domain. Residues 92–93 (GT), His99, His105, 131–140 (KLIPSLKNFG), 165–167 (TVE), Thr237, and Asp290 each bind substrate. A Zn(2+)-binding site is contributed by His99. The CBS 1 domain maps to 227 to 284 (MQTRLPTILPTTNFTDCLTVMNEGRMGVALVMENEQLKGIITDGDIRRALTANGAGTL). One can recognise a CBS 2 domain in the interval 292–337 (MTSSPKTIHQDEFLSKAEDFMKAKKIHSLVVVNDENHVVGLVEFSS).

It belongs to the SIS family. GutQ/KpsF subfamily.

It catalyses the reaction D-arabinose 5-phosphate = D-ribulose 5-phosphate. In terms of biological role, catalyzes the reversible aldol-ketol isomerization between D-ribulose 5-phosphate (Ru5P) and D-arabinose 5-phosphate (A5P). This is Probable arabinose 5-phosphate isomerase from Haemophilus influenzae (strain ATCC 51907 / DSM 11121 / KW20 / Rd).